The primary structure comprises 853 residues: A-kinase anchor protein 3 (853 aa).

The segment at 124 to 137 (VSFYANRLTNLVIA) is PKA-RII subunit binding domain. The tract at residues 188-240 (RNAAPDKAPGSGDRVSGSSQSPPNLKYKSTLKIKESTKERQGPDDKPPSKKSF) is disordered. Residues S205 and S208 each carry the phosphoserine modification. Residues 219-235 (KIKESTKERQGPDDKPP) show a composition bias toward basic and acidic residues. Residue S403 is modified to Phosphoserine. Position 404 is a phosphotyrosine (Y404). Phosphoserine occurs at positions 635 and 636.

Belongs to the AKAP110 family. Interacts with ROPN1 and ROPN1L. Interacts with QRICH2. Post-translationally, phosphorylated by STK33 during sperm flagella assembly. Phosphorylated on tyrosine residues. As to expression, testis specific; only expressed in spermatids.

It is found in the cytoplasmic vesicle. Its subcellular location is the secretory vesicle. The protein localises to the acrosome. It localises to the cell projection. The protein resides in the cilium. It is found in the flagellum. Structural component of sperm fibrous sheath. Required for the formation of the subcellular structure of the sperm flagellum, sperm motility and male fertility. In Homo sapiens (Human), this protein is A-kinase anchor protein 3.